Here is a 156-residue protein sequence, read N- to C-terminus: Succinate dehydrogenase assembly factor 2-B, mitochondrial (156 aa).

The N-terminal 24 residues, 1-24, are a transit peptide targeting the mitochondrion; the sequence is MLRQLIVSTVGRRMPLQMISQSRL.

It belongs to the SDHAF2 family. In terms of assembly, interacts with the flavoprotein subunit within the SDH catalytic dimer.

It localises to the mitochondrion matrix. Plays an essential role in the assembly of succinate dehydrogenase (SDH), an enzyme complex (also referred to as respiratory complex II) that is a component of both the tricarboxylic acid (TCA) cycle and the mitochondrial electron transport chain, and which couples the oxidation of succinate to fumarate with the reduction of ubiquinone (coenzyme Q) to ubiquinol. Required for flavinylation (covalent attachment of FAD) of the flavoprotein subunit of the SDH catalytic dimer. This is Succinate dehydrogenase assembly factor 2-B, mitochondrial from Drosophila erecta (Fruit fly).